The following is a 56-amino-acid chain: EECGPNEVFNTCGSACAPTCAQPKTRICTMQCRIGCQCQEGFLRNGEGACVLPENC.

5 cysteine pairs are disulfide-bonded: cysteine 3/cysteine 36, cysteine 12/cysteine 32, cysteine 16/cysteine 28, cysteine 20/cysteine 56, and cysteine 38/cysteine 50. The 54-residue stretch at cysteine 3–cysteine 56 folds into the TIL domain.

It belongs to the serine protease inhibitor-like (TIL domain-containing) family.

Its subcellular location is the secreted. Functionally, chymotrypsin and cathepsin G inhibitor. The chain is Chymotrypsin inhibitor from Apis mellifera (Honeybee).